Reading from the N-terminus, the 309-residue chain is Glutamyl-Q tRNA(Asp) synthetase (309 aa).

L-glutamate contacts are provided by residues 8–12 and glutamate 44; that span reads RFSPS. Residues 11-21 carry the 'HIGH' region motif; it reads PSPTGPLHAGS. Zn(2+) is bound by residues cysteine 100, cysteine 102, tyrosine 126, and cysteine 130. Residues tyrosine 205 and arginine 223 each contribute to the L-glutamate site. The short motif at 261–265 is the 'KMSKS' region element; that stretch reads KLSKQ. Lysine 264 provides a ligand contact to ATP.

It belongs to the class-I aminoacyl-tRNA synthetase family. GluQ subfamily. Zn(2+) serves as cofactor.

Functionally, catalyzes the tRNA-independent activation of glutamate in presence of ATP and the subsequent transfer of glutamate onto a tRNA(Asp). Glutamate is transferred on the 2-amino-5-(4,5-dihydroxy-2-cyclopenten-1-yl) moiety of the queuosine in the wobble position of the QUC anticodon. This is Glutamyl-Q tRNA(Asp) synthetase from Albidiferax ferrireducens (strain ATCC BAA-621 / DSM 15236 / T118) (Rhodoferax ferrireducens).